The chain runs to 108 residues: Small ribosomal subunit protein eS25w (108 aa).

A disordered region spans residues 1–36 (MAPKKDKVPPPSSKPAKSGGGKQKKKKWSKGKQKEK). The segment covering 22–31 (KQKKKKWSKG) has biased composition (basic residues).

It belongs to the eukaryotic ribosomal protein eS25 family.

The polypeptide is Small ribosomal subunit protein eS25w (RPS25E) (Arabidopsis thaliana (Mouse-ear cress)).